The following is a 64-amino-acid chain: Large ribosomal subunit protein bL28 (64 aa).

The protein belongs to the bacterial ribosomal protein bL28 family.

This chain is Large ribosomal subunit protein bL28, found in Trichlorobacter lovleyi (strain ATCC BAA-1151 / DSM 17278 / SZ) (Geobacter lovleyi).